Here is a 282-residue protein sequence, read N- to C-terminus: HTH-type transcriptional activator RhaR (282 aa).

Positions 179–277 constitute an HTH araC/xylS-type domain; sequence DKLITRLAAS…GMTPSQWRHL (99 aa). 2 consecutive DNA-binding regions (H-T-H motif) follow at residues 196–217 and 244–267; these read DKFC…RQQT and ISDI…TRET.

Binds DNA as a dimer.

The protein resides in the cytoplasm. Its function is as follows. Activates expression of the rhaSR operon in response to L-rhamnose. In Escherichia coli O1:K1 / APEC, this protein is HTH-type transcriptional activator RhaR.